A 240-amino-acid polypeptide reads, in one-letter code: Ubiquinone biosynthesis O-methyltransferase (240 aa).

Residues arginine 44, glycine 64, aspartate 85, and methionine 129 each contribute to the S-adenosyl-L-methionine site.

It belongs to the methyltransferase superfamily. UbiG/COQ3 family.

The enzyme catalyses a 3-demethylubiquinol + S-adenosyl-L-methionine = a ubiquinol + S-adenosyl-L-homocysteine + H(+). It catalyses the reaction a 3-(all-trans-polyprenyl)benzene-1,2-diol + S-adenosyl-L-methionine = a 2-methoxy-6-(all-trans-polyprenyl)phenol + S-adenosyl-L-homocysteine + H(+). It participates in cofactor biosynthesis; ubiquinone biosynthesis. In terms of biological role, O-methyltransferase that catalyzes the 2 O-methylation steps in the ubiquinone biosynthetic pathway. In Escherichia coli O9:H4 (strain HS), this protein is Ubiquinone biosynthesis O-methyltransferase.